Reading from the N-terminus, the 320-residue chain is D-amino-acid oxidase (320 aa).

Residues Ala13, Gly14, Val15, Thr42, Thr43, Ser44, Gly48, and Ala49 each coordinate FAD. 2 residues coordinate D-proline: Tyr220 and Arg274. Residues Tyr220 and Arg274 each contribute to the D-serine site. FAD-binding residues include Arg274, Gly299, Gly300, Gly302, and Thr304. D-proline is bound at residue Gly300. Gly300 provides a ligand contact to D-serine.

The protein belongs to the DAMOX/DASOX family. Requires FAD as cofactor.

The protein localises to the cytoplasm. The protein resides in the secreted. It is found in the cell wall. The enzyme catalyses a D-alpha-amino acid + O2 + H2O = a 2-oxocarboxylate + H2O2 + NH4(+). Functionally, catalyzes the oxidative deamination of D-amino acids with broad substrate specificity. Enables the organism to utilize D-amino acids as a source of nutrients. Enables the organism to utilize glycine as a carbon source. This is D-amino-acid oxidase from Mycobacterium tuberculosis (strain ATCC 25177 / H37Ra).